The sequence spans 61 residues: Metallothionein-1E (61 aa).

At M1 the chain carries N-acetylmethionine. Residues 1–29 (MDPNCSCPTGGSCSCAGSCTCKACRCTSC) are beta. A divalent metal cation is bound by residues C5, C7, C13, C15, C19, C21, C24, C26, C29, C33, C34, C36, C37, C41, C44, C48, C50, C57, C59, and C60. The interval 30 to 61 (KKSCCSCCPVGCAKCAQGCICKGASDKCSCCA) is alpha.

It belongs to the metallothionein superfamily. Type 1 family. As to quaternary structure, monomer.

In terms of biological role, metallothioneins have a high content of cysteine residues that bind various heavy metals; these proteins are transcriptionally regulated by both heavy metals and glucocorticoids. This Sus scrofa (Pig) protein is Metallothionein-1E (MT1E).